The sequence spans 393 residues: NAD(P)H-quinone oxidoreductase subunit H, chloroplastic (393 aa).

The protein belongs to the complex I 49 kDa subunit family. In terms of assembly, NDH is composed of at least 16 different subunits, 5 of which are encoded in the nucleus.

It localises to the plastid. The protein resides in the chloroplast thylakoid membrane. It carries out the reaction a plastoquinone + NADH + (n+1) H(+)(in) = a plastoquinol + NAD(+) + n H(+)(out). The enzyme catalyses a plastoquinone + NADPH + (n+1) H(+)(in) = a plastoquinol + NADP(+) + n H(+)(out). Its function is as follows. NDH shuttles electrons from NAD(P)H:plastoquinone, via FMN and iron-sulfur (Fe-S) centers, to quinones in the photosynthetic chain and possibly in a chloroplast respiratory chain. The immediate electron acceptor for the enzyme in this species is believed to be plastoquinone. Couples the redox reaction to proton translocation, and thus conserves the redox energy in a proton gradient. This is NAD(P)H-quinone oxidoreductase subunit H, chloroplastic from Trifolium subterraneum (Subterranean clover).